The following is a 24-amino-acid chain: Brevinin-1E (24 aa).

Cys18 and Cys24 form a disulfide bridge.

As to expression, expressed by the skin glands.

It localises to the secreted. Antimicrobial peptide. Stimulates insulin release by BRIN-BD11 cells in vitro. This is Brevinin-1E from Pelophylax saharicus (Sahara frog).